Here is a 378-residue protein sequence, read N- to C-terminus: MQTPKLIRPTLLSMAILSSMAWATGASAALVPPKGYDAPIEKIKTGDHSFSCEAIPKPYTDKLVFRSKYEGSDKARATLNAVSEEAFRDATKDITTLERGVSKVVMQYMRDGRPEQLDCALNMMTTWAKADALESREFNHTGKSMRKWALGSMSSAYLRLKFSESHPLANRQQDAKIIEAWFSKLADQVVSDWSNLPLDKINNHSYWAAWSVMATAVATNRQDLFDWAVKEYKVAANQVDKDGFLPNEMKRRQRALSYHNYALPPLAMIASFAQANGVDLRPENNGALKRLGDRVLAGVKDPSIFAEHNGEKQDMTDLKKDPKFAWLEPYCSLYTCSPDVLEEKHEKQPFKTFRLGGDLTKVYDPSHEKGDKGDNDGS.

A signal peptide spans 1 to 28 (MQTPKLIRPTLLSMAILSSMAWATGASA). Residues 67–68 (SK), 140–141 (HT), and Y258 contribute to the substrate site. The tract at residues 359 to 378 (LTKVYDPSHEKGDKGDNDGS) is disordered. Residues 364–378 (DPSHEKGDKGDNDGS) show a composition bias toward basic and acidic residues.

This sequence belongs to the polysaccharide lyase 5 family.

The protein localises to the periplasm. It catalyses the reaction Eliminative cleavage of alginate to give oligosaccharides with 4-deoxy-alpha-L-erythro-hex-4-enuronosyl groups at their non-reducing ends and beta-D-mannuronate at their reducing end.. Its function is as follows. Catalyzes the depolymerization of alginate by cleaving the beta-1,4 glycosidic bond between two adjacent sugar residues via a beta-elimination mechanism. May serve to degrade mislocalized alginate that is trapped in the periplasmic space. This Pseudomonas syringae pv. syringae (strain B728a) protein is Alginate lyase.